The following is a 290-amino-acid chain: Ribosomal RNA small subunit methyltransferase A (290 aa).

Asn27, Leu29, Gly54, Glu75, Asp100, and Asn125 together coordinate S-adenosyl-L-methionine.

The protein belongs to the class I-like SAM-binding methyltransferase superfamily. rRNA adenine N(6)-methyltransferase family. RsmA subfamily.

The protein resides in the cytoplasm. It catalyses the reaction adenosine(1518)/adenosine(1519) in 16S rRNA + 4 S-adenosyl-L-methionine = N(6)-dimethyladenosine(1518)/N(6)-dimethyladenosine(1519) in 16S rRNA + 4 S-adenosyl-L-homocysteine + 4 H(+). Specifically dimethylates two adjacent adenosines (A1518 and A1519) in the loop of a conserved hairpin near the 3'-end of 16S rRNA in the 30S particle. May play a critical role in biogenesis of 30S subunits. In Streptococcus pneumoniae (strain JJA), this protein is Ribosomal RNA small subunit methyltransferase A.